We begin with the raw amino-acid sequence, 116 residues long: Large ribosomal subunit protein bL17 (116 aa).

This sequence belongs to the bacterial ribosomal protein bL17 family. As to quaternary structure, part of the 50S ribosomal subunit. Contacts protein L32.

In Synechococcus sp. (strain WH7803), this protein is Large ribosomal subunit protein bL17.